The chain runs to 248 residues: Acetoacetyl-CoA reductase (248 aa).

NADP(+) contacts are provided by residues 14 to 16 (GGI), Arg-42, and 90 to 94 (NAGIT). Residues Asp-96 and 149–152 (QFGQ) each bind substrate. The Proton acceptor role is filled by Tyr-155. Residue 185–188 (PGYT) participates in NADP(+) binding. Residues 186 to 187 (GY) and Arg-197 contribute to the substrate site.

The protein belongs to the short-chain dehydrogenases/reductases (SDR) family.

It is found in the cytoplasm. It carries out the reaction a (3R)-3-hydroxyacyl-CoA + NADP(+) = a 3-oxoacyl-CoA + NADPH + H(+). It functions in the pathway biopolymer metabolism; poly-(R)-3-hydroxybutanoate biosynthesis. The chain is Acetoacetyl-CoA reductase (phaB) from Acinetobacter sp. (strain RA3849).